A 238-amino-acid polypeptide reads, in one-letter code: NEDD4-binding protein 2-like 1 (238 aa).

2 disordered regions span residues M1 to H36 and V183 to Y212. The span at Q20–P31 shows a compositional bias: pro residues. Polar residues predominate over residues A192–Y212.

As to quaternary structure, interacts with dynactin subunit proteins, including DCTN4, DCTN5 and DCTN5.

Might play a role in adipocyte differentiation and triglyceride accumulation. This chain is NEDD4-binding protein 2-like 1 (N4bp2l1), found in Mus musculus (Mouse).